A 333-amino-acid polypeptide reads, in one-letter code: tRNA dimethylallyltransferase (333 aa).

23–30 (GPTGAGKT) contributes to the ATP binding site. 25 to 30 (TGAGKT) is a binding site for substrate. 2 interaction with substrate tRNA regions span residues 53 to 56 (DSAL) and 177 to 181 (QRVQR).

Belongs to the IPP transferase family. As to quaternary structure, monomer. Mg(2+) is required as a cofactor.

It catalyses the reaction adenosine(37) in tRNA + dimethylallyl diphosphate = N(6)-dimethylallyladenosine(37) in tRNA + diphosphate. Functionally, catalyzes the transfer of a dimethylallyl group onto the adenine at position 37 in tRNAs that read codons beginning with uridine, leading to the formation of N6-(dimethylallyl)adenosine (i(6)A). The protein is tRNA dimethylallyltransferase of Polynucleobacter asymbioticus (strain DSM 18221 / CIP 109841 / QLW-P1DMWA-1) (Polynucleobacter necessarius subsp. asymbioticus).